A 361-amino-acid chain; its full sequence is Biotin synthase (361 aa).

In terms of domain architecture, Radical SAM core spans 47–278 (VHGDEVALCG…AAHIFVMGGR (232 aa)). Residues cysteine 65, cysteine 69, and cysteine 72 each contribute to the [4Fe-4S] cluster site. [2Fe-2S] cluster-binding residues include serine 110, cysteine 143, and cysteine 203. The segment at 323–361 (TLRPPDTGKPWAFDGHAPSDADWNRKAAEPRPRPLPVVR) is disordered. Basic and acidic residues predominate over residues 339–354 (APSDADWNRKAAEPRP).

It belongs to the radical SAM superfamily. Biotin synthase family. As to quaternary structure, homodimer. The cofactor is [4Fe-4S] cluster. [2Fe-2S] cluster serves as cofactor.

It catalyses the reaction (4R,5S)-dethiobiotin + (sulfur carrier)-SH + 2 reduced [2Fe-2S]-[ferredoxin] + 2 S-adenosyl-L-methionine = (sulfur carrier)-H + biotin + 2 5'-deoxyadenosine + 2 L-methionine + 2 oxidized [2Fe-2S]-[ferredoxin]. The protein operates within cofactor biosynthesis; biotin biosynthesis; biotin from 7,8-diaminononanoate: step 2/2. Catalyzes the conversion of dethiobiotin (DTB) to biotin by the insertion of a sulfur atom into dethiobiotin via a radical-based mechanism. The polypeptide is Biotin synthase (Anaeromyxobacter sp. (strain K)).